Consider the following 66-residue polypeptide: Large ribosomal subunit protein uL29 (66 aa).

This sequence belongs to the universal ribosomal protein uL29 family.

The polypeptide is Large ribosomal subunit protein uL29 (Chelativorans sp. (strain BNC1)).